The chain runs to 398 residues: Succinate--CoA ligase [ADP-forming] subunit beta (398 aa).

One can recognise an ATP-grasp domain in the interval 9-253; that stretch reads KEILASYGVR…IREENPIEVE (245 aa). Residues K50, 57–59, V106, and E116 each bind ATP; that span reads GRG. Mg(2+)-binding residues include N208 and D222. Substrate contacts are provided by residues N273 and 330 to 332; that span reads GIV.

The protein belongs to the succinate/malate CoA ligase beta subunit family. As to quaternary structure, heterotetramer of two alpha and two beta subunits. Mg(2+) is required as a cofactor.

The enzyme catalyses succinate + ATP + CoA = succinyl-CoA + ADP + phosphate. It catalyses the reaction GTP + succinate + CoA = succinyl-CoA + GDP + phosphate. The protein operates within carbohydrate metabolism; tricarboxylic acid cycle; succinate from succinyl-CoA (ligase route): step 1/1. Its function is as follows. Succinyl-CoA synthetase functions in the citric acid cycle (TCA), coupling the hydrolysis of succinyl-CoA to the synthesis of either ATP or GTP and thus represents the only step of substrate-level phosphorylation in the TCA. The beta subunit provides nucleotide specificity of the enzyme and binds the substrate succinate, while the binding sites for coenzyme A and phosphate are found in the alpha subunit. In Flavobacterium psychrophilum (strain ATCC 49511 / DSM 21280 / CIP 103535 / JIP02/86), this protein is Succinate--CoA ligase [ADP-forming] subunit beta.